A 286-amino-acid chain; its full sequence is 4-diphosphocytidyl-2-C-methyl-D-erythritol kinase (286 aa).

Lys-13 is a catalytic residue. ATP is bound at residue 99–109 (PMGGGLGGGSS). The active site involves Asp-141.

This sequence belongs to the GHMP kinase family. IspE subfamily.

The enzyme catalyses 4-CDP-2-C-methyl-D-erythritol + ATP = 4-CDP-2-C-methyl-D-erythritol 2-phosphate + ADP + H(+). The protein operates within isoprenoid biosynthesis; isopentenyl diphosphate biosynthesis via DXP pathway; isopentenyl diphosphate from 1-deoxy-D-xylulose 5-phosphate: step 3/6. Catalyzes the phosphorylation of the position 2 hydroxy group of 4-diphosphocytidyl-2C-methyl-D-erythritol. The sequence is that of 4-diphosphocytidyl-2-C-methyl-D-erythritol kinase from Herminiimonas arsenicoxydans.